The chain runs to 334 residues: Holliday junction branch migration complex subunit RuvB (334 aa).

The interval 4-184 (ADRLISAAVI…FGIVQRLEFY (181 aa)) is large ATPase domain (RuvB-L). Residues Ile-23, Arg-24, Gly-65, Lys-68, Thr-69, Thr-70, 131–133 (EDY), Arg-174, Tyr-184, and Arg-221 each bind ATP. Residue Thr-69 participates in Mg(2+) binding. The segment at 185–255 (QVADLEHIVS…VAMKALDMLN (71 aa)) is small ATPAse domain (RuvB-S). Positions 258–334 (AEGFDFMDRK…YKHFGITREE (77 aa)) are head domain (RuvB-H). DNA contacts are provided by Arg-294, Arg-313, and Arg-318.

This sequence belongs to the RuvB family. In terms of assembly, homohexamer. Forms an RuvA(8)-RuvB(12)-Holliday junction (HJ) complex. HJ DNA is sandwiched between 2 RuvA tetramers; dsDNA enters through RuvA and exits via RuvB. An RuvB hexamer assembles on each DNA strand where it exits the tetramer. Each RuvB hexamer is contacted by two RuvA subunits (via domain III) on 2 adjacent RuvB subunits; this complex drives branch migration. In the full resolvosome a probable DNA-RuvA(4)-RuvB(12)-RuvC(2) complex forms which resolves the HJ.

The protein localises to the cytoplasm. The catalysed reaction is ATP + H2O = ADP + phosphate + H(+). In terms of biological role, the RuvA-RuvB-RuvC complex processes Holliday junction (HJ) DNA during genetic recombination and DNA repair, while the RuvA-RuvB complex plays an important role in the rescue of blocked DNA replication forks via replication fork reversal (RFR). RuvA specifically binds to HJ cruciform DNA, conferring on it an open structure. The RuvB hexamer acts as an ATP-dependent pump, pulling dsDNA into and through the RuvAB complex. RuvB forms 2 homohexamers on either side of HJ DNA bound by 1 or 2 RuvA tetramers; 4 subunits per hexamer contact DNA at a time. Coordinated motions by a converter formed by DNA-disengaged RuvB subunits stimulates ATP hydrolysis and nucleotide exchange. Immobilization of the converter enables RuvB to convert the ATP-contained energy into a lever motion, pulling 2 nucleotides of DNA out of the RuvA tetramer per ATP hydrolyzed, thus driving DNA branch migration. The RuvB motors rotate together with the DNA substrate, which together with the progressing nucleotide cycle form the mechanistic basis for DNA recombination by continuous HJ branch migration. Branch migration allows RuvC to scan DNA until it finds its consensus sequence, where it cleaves and resolves cruciform DNA. This is Holliday junction branch migration complex subunit RuvB from Yersinia pseudotuberculosis serotype O:1b (strain IP 31758).